The primary structure comprises 192 residues: MEYRSLTLDDFLSRFQLLRPQINRETLNHRQAAVLIPIVRRPQPGLLLTQRSIHLRKHAGQVAFPGGAVDDTDTSVIAAALREAEEEVAIPPSAVEVIGVLPPVDSVTGYQVTPVVGIIPPDLPYSASEDEVSAVFEMPLAQALHLGRYHPLDIYRRGDSHRVWLSWYEQYFVWGMTAGIIRELALQIGVKP.

In terms of domain architecture, Nudix hydrolase spans 29–160 (HRQAAVLIPI…PLDIYRRGDS (132 aa)). The short motif at 67-89 (GAVDDTDTSVIAAALREAEEEVA) is the Nudix box element. Mg(2+) is bound by residues Glu-83 and Glu-87.

The protein belongs to the Nudix hydrolase family. PCD1 subfamily. The cofactor is Mn(2+). It depends on Mg(2+) as a cofactor.

Functionally, probably mediates the hydrolysis of some nucleoside diphosphate derivatives. This is an uncharacterized protein from Escherichia coli O7:K1 (strain IAI39 / ExPEC).